Consider the following 62-residue polypeptide: Small, acid-soluble spore protein A (62 aa).

It belongs to the alpha/beta-type SASP family.

Its function is as follows. SASP are bound to spore DNA. They are double-stranded DNA-binding proteins that cause DNA to change to an a-like conformation. They protect the DNA backbone from chemical and enzymatic cleavage and are thus involved in dormant spore's high resistance to UV light. In Priestia megaterium (Bacillus megaterium), this protein is Small, acid-soluble spore protein A (sasP-A).